The chain runs to 339 residues: EEIG family member 2 (339 aa).

Residues Met-1–Leu-111 form the C2 NT-type domain. Ser-197 carries the post-translational modification Phosphoserine. Positions Thr-226 to Pro-262 are disordered. Low complexity predominate over residues Thr-230 to Thr-248. Residues Ala-249 to Ala-259 are compositionally biased toward basic and acidic residues. 5 positions are modified to phosphoserine: Ser-255, Ser-267, Ser-299, Ser-300, and Ser-329.

It belongs to the EEIG family. In terms of tissue distribution, expressed in bone marrow-derived macrophages.

This is EEIG family member 2 (Eeig2) from Mus musculus (Mouse).